We begin with the raw amino-acid sequence, 1063 residues long: Retinoblastoma-like protein 1 (1063 aa).

Residues T332, T369, and T385 each carry the phosphothreonine modification. Residues 383–584 (VTTPVASATQ…WEALHASANR (202 aa)) are domain A. Residues 383 to 944 (VTTPVASATQ…GRVKSFALKY (562 aa)) form a pocket; binds T and E1A region. The segment at 585–779 (VPSCEEVIFP…AQDAHLTGVS (195 aa)) is spacer. 4 positions are modified to phosphoserine: S640, S650, S748, and S761. Positions 780–944 (KPKRTGSLAL…GRVKSFALKY (165 aa)) are domain B. 3 positions are modified to phosphoserine: S959, S970, and S983. Residue T992 is modified to Phosphothreonine. 2 positions are modified to phosphoserine: S1004 and S1036.

It belongs to the retinoblastoma protein (RB) family. As to quaternary structure, component of the DREAM complex (also named LINC complex) at least composed of E2F4, E2F5, LIN9, LIN37, LIN52, LIN54, MYBL1, MYBL2, RBL1, RBL2, RBBP4, TFDP1 and TFDP2. The complex exists in quiescent cells where it represses cell cycle-dependent genes. It dissociates in S phase when LIN9, LIN37, LIN52 and LIN54 form a subcomplex that binds to MYBL2. Interacts with AATF. Interacts with KDM5A. Interacts with KMT5B and KMT5C. Interacts with USP4. Interacts with RBBP9. Post-translationally, cell-cycle arrest properties are inactivated by phosphorylation on Thr-332, Ser-640, Ser-959 and Ser-970 by CDK4. As to expression, highly expressed in fetal heart and liver. Expressed at low levels in all other fetal tissues except skeletal muscle. High levels in neonatal spleen and thymus with low levels in other tissues. In adult, highly expressed in testis. Barely detectable in other tissues.

The protein resides in the nucleus. Key regulator of entry into cell division. Directly involved in heterochromatin formation by maintaining overall chromatin structure and, in particular, that of constitutive heterochromatin by stabilizing histone methylation. Recruits and targets histone methyltransferases KMT5B and KMT5C, leading to epigenetic transcriptional repression. Controls histone H4 'Lys-20' trimethylation. Probably acts as a transcription repressor by recruiting chromatin-modifying enzymes to promoters. Potent inhibitor of E2F-mediated trans-activation. May act as a tumor suppressor. This is Retinoblastoma-like protein 1 (Rbl1) from Mus musculus (Mouse).